The chain runs to 320 residues: Cytochrome f (320 aa).

A signal peptide spans 1–35 (MQNRNTFSWVKEPINRSISVLIIIYVITQTSISNA). Heme is bound by residues Y36, C56, C59, and H60. Residues 286–306 (VQGLLFFLASVTLAQIFLVLK) traverse the membrane as a helical segment.

Belongs to the cytochrome f family. The 4 large subunits of the cytochrome b6-f complex are cytochrome b6, subunit IV (17 kDa polypeptide, petD), cytochrome f and the Rieske protein, while the 4 small subunits are PetG, PetL, PetM and PetN. The complex functions as a dimer. Heme is required as a cofactor.

Its subcellular location is the plastid. The protein resides in the chloroplast thylakoid membrane. Its function is as follows. Component of the cytochrome b6-f complex, which mediates electron transfer between photosystem II (PSII) and photosystem I (PSI), cyclic electron flow around PSI, and state transitions. The sequence is that of Cytochrome f from Piper cenocladum (Ant piper).